The following is a 402-amino-acid chain: Exodeoxyribonuclease 7 large subunit (402 aa).

This sequence belongs to the XseA family. Heterooligomer composed of large and small subunits.

The protein resides in the cytoplasm. The catalysed reaction is Exonucleolytic cleavage in either 5'- to 3'- or 3'- to 5'-direction to yield nucleoside 5'-phosphates.. Its function is as follows. Bidirectionally degrades single-stranded DNA into large acid-insoluble oligonucleotides, which are then degraded further into small acid-soluble oligonucleotides. The sequence is that of Exodeoxyribonuclease 7 large subunit from Moorella thermoacetica (strain ATCC 39073 / JCM 9320).